Consider the following 467-residue polypeptide: Ribulose bisphosphate carboxylase large chain (467 aa).

Residues 1-2 (MS) constitute a propeptide that is removed on maturation. Proline 3 bears the N-acetylproline mark. Residue lysine 14 is modified to N6,N6,N6-trimethyllysine. Residues asparagine 123 and threonine 173 each coordinate substrate. Lysine 175 functions as the Proton acceptor in the catalytic mechanism. Lysine 177 contacts substrate. Positions 201, 203, and 204 each coordinate Mg(2+). At lysine 201 the chain carries N6-carboxylysine. Catalysis depends on histidine 294, which acts as the Proton acceptor. Arginine 295, histidine 327, and serine 379 together coordinate substrate.

This sequence belongs to the RuBisCO large chain family. Type I subfamily. As to quaternary structure, heterohexadecamer of 8 large chains and 8 small chains; disulfide-linked. The disulfide link is formed within the large subunit homodimers. The cofactor is Mg(2+). In terms of processing, the disulfide bond which can form in the large chain dimeric partners within the hexadecamer appears to be associated with oxidative stress and protein turnover.

Its subcellular location is the plastid. The protein resides in the chloroplast. The catalysed reaction is 2 (2R)-3-phosphoglycerate + 2 H(+) = D-ribulose 1,5-bisphosphate + CO2 + H2O. It catalyses the reaction D-ribulose 1,5-bisphosphate + O2 = 2-phosphoglycolate + (2R)-3-phosphoglycerate + 2 H(+). Its function is as follows. RuBisCO catalyzes two reactions: the carboxylation of D-ribulose 1,5-bisphosphate, the primary event in carbon dioxide fixation, as well as the oxidative fragmentation of the pentose substrate in the photorespiration process. Both reactions occur simultaneously and in competition at the same active site. The protein is Ribulose bisphosphate carboxylase large chain of Calamus usitatus (Palm tree).